Here is an 806-residue protein sequence, read N- to C-terminus: MFGNEMDDTRDPLQYGYQRVNTGEGSLSTSTTGTSLDTIVLDTNAEDLNSTPRVGAQRTFSPILETDDTNPFLDPPPPGQKSPPAVGEAKAKSKSSLKGSRVSFDQEDRFDETDEGFRKQREHFQKHKSHSTSEHKNQLIKELRHLLAADNRRQFQGKKHVSLDVQSSKVLEELLKASSSEDDFEGQRKQFQERKHKSLDARHISFKFEKEPTPSSSEEDFEPSTSLLKIDADITKPVIIDLKVNRAQSDQALTQFQKNLAHFQDLESSEDEDYISSRKHFQQAKSMSTDSRKSNKSIRFFEMEMGTKEENIRTAVPFVRQITEDGKPKLEVYRPTTNPIFIWTQVLAALSVSLGSMVVGFSSAYTSPALVSMKDRNITSFEVTDQSGSWVGGIMPLAGLAGGILGGPLIEYLGRKNTILATATPFIISWLLIACATHVAMVLVGRALSGFSVGVASLSLPVYLGETVQPEVRGTLGLLPTAFGNIGILLCFVAGKYMDWSGLAFLGAALPIPFLLLMFLIPETPRWYVSRGRDDRARKALQWLRGKKADVDPELKGIIKSHQDAERHASQSAMLDLMKKANLKPLLISLGLMFFQQLSGINAVIFYTVQIFQDAGSTIDENLCTIIVGVVNFIATFIATMLIDRLGRKMLLYISDVAMIITLMTLGGFFYVKNSGQDVSQVGWLPLAAFVIYVLGFSLGFGPIPWLMMGEILPGKIRGSAASVATAFNWSCTFIVTKTFADIINAIGTHGTFWMFGSICVIGLAFVIFYVPETQGKSLEDIERKMMGRVRRMSSVANIKPLSFNM.

Disordered regions lie at residues 1–34 (MFGNEMDDTRDPLQYGYQRVNTGEGSLSTSTTGT) and 48–138 (LNST…HKNQ). The Cytoplasmic segment spans residues 1–339 (MFGNEMDDTR…LEVYRPTTNP (339 aa)). Residues 25-34 (GSLSTSTTGT) show a composition bias toward low complexity. A helical membrane pass occupies residues 340-360 (IFIWTQVLAALSVSLGSMVVG). The Extracellular portion of the chain corresponds to 361–389 (FSSAYTSPALVSMKDRNITSFEVTDQSGS). N-linked (GlcNAc...) asparagine glycosylation occurs at asparagine 377. Residues 390–410 (WVGGIMPLAGLAGGILGGPLI) traverse the membrane as a helical segment. Residues 411–424 (EYLGRKNTILATAT) are Cytoplasmic-facing. The helical transmembrane segment at 425–445 (PFIISWLLIACATHVAMVLVG) threads the bilayer. Residues 446 to 447 (RA) are Extracellular-facing. Residues 448–468 (LSGFSVGVASLSLPVYLGETV) traverse the membrane as a helical segment. At 469 to 473 (QPEVR) the chain is on the cytoplasmic side. The helical transmembrane segment at 474 to 494 (GTLGLLPTAFGNIGILLCFVA) threads the bilayer. At 495 to 501 (GKYMDWS) the chain is on the extracellular side. A helical membrane pass occupies residues 502 to 522 (GLAFLGAALPIPFLLLMFLIP). Over 523-585 (ETPRWYVSRG…DLMKKANLKP (63 aa)) the chain is Cytoplasmic. A helical transmembrane segment spans residues 586-606 (LLISLGLMFFQQLSGINAVIF). The Extracellular segment spans residues 607–622 (YTVQIFQDAGSTIDEN). Residues 623 to 643 (LCTIIVGVVNFIATFIATMLI) traverse the membrane as a helical segment. Over 644–649 (DRLGRK) the chain is Cytoplasmic. The helical transmembrane segment at 650-670 (MLLYISDVAMIITLMTLGGFF) threads the bilayer. Residues 671 to 681 (YVKNSGQDVSQ) lie on the Extracellular side of the membrane. Residues 682 to 702 (VGWLPLAAFVIYVLGFSLGFG) form a helical membrane-spanning segment. The Cytoplasmic segment spans residues 703-723 (PIPWLMMGEILPGKIRGSAAS). A helical membrane pass occupies residues 724–744 (VATAFNWSCTFIVTKTFADII). Residues 745–750 (NAIGTH) lie on the Extracellular side of the membrane. A helical transmembrane segment spans residues 751-771 (GTFWMFGSICVIGLAFVIFYV). Over 772 to 806 (PETQGKSLEDIERKMMGRVRRMSSVANIKPLSFNM) the chain is Cytoplasmic.

The protein belongs to the major facilitator superfamily. Sugar transporter (TC 2.A.1.1) family. Trehalose transporter subfamily.

It localises to the cell membrane. In terms of biological role, high-capacity facilitative transporter for trehalose. Does not transport maltose, sucrose or lactose. Mediates the bidirectional transfer of trehalose. Responsible for the transport of trehalose synthesized in the fat body and the incorporation of trehalose into other tissues that require a carbon source, thereby regulating trehalose levels in the hemolymph. This Aedes aegypti (Yellowfever mosquito) protein is Facilitated trehalose transporter Tret1.